The primary structure comprises 89 residues: Small ribosomal subunit protein uS17 (89 aa).

This sequence belongs to the universal ribosomal protein uS17 family. In terms of assembly, part of the 30S ribosomal subunit.

Functionally, one of the primary rRNA binding proteins, it binds specifically to the 5'-end of 16S ribosomal RNA. In Polynucleobacter asymbioticus (strain DSM 18221 / CIP 109841 / QLW-P1DMWA-1) (Polynucleobacter necessarius subsp. asymbioticus), this protein is Small ribosomal subunit protein uS17.